Reading from the N-terminus, the 213-residue chain is LexA repressor (213 aa).

A DNA-binding region (H-T-H motif) is located at residues 27 to 47 (QTEIARAFGFKGVRAAQYHLE). Residues Ser-133 and Lys-170 each act as for autocatalytic cleavage activity in the active site.

It belongs to the peptidase S24 family. As to quaternary structure, homodimer.

The catalysed reaction is Hydrolysis of Ala-|-Gly bond in repressor LexA.. In terms of biological role, represses a number of genes involved in the response to DNA damage (SOS response), including recA and lexA. In the presence of single-stranded DNA, RecA interacts with LexA causing an autocatalytic cleavage which disrupts the DNA-binding part of LexA, leading to derepression of the SOS regulon and eventually DNA repair. In Xanthomonas campestris, this protein is LexA repressor.